We begin with the raw amino-acid sequence, 419 residues long: AT-hook motif nuclear-localized protein 4 (419 aa).

Disordered regions lie at residues 1-168, 301-337, and 382-419; these read MEER…SGGG, QQQQ…DPKA, and DLFS…EVPS. Residues 78 to 86 carry the Bipartite nuclear localization signal motif; it reads KKKRGRPRK. Positions 78 to 90 form a DNA-binding region, a.T hook; that stretch reads KKKRGRPRKYNPD. Residues 101–112 show a composition bias toward polar residues; it reads PISSSVPLTSEF. Positions 115 to 130 are enriched in basic residues; sequence RKRGRGRGRGRGRGRG. A compositionally biased stretch (low complexity) spans 136–148; the sequence is GSREPNNNNNDNN. The region spanning 174 to 314 is the PPC domain; it reads VSPSFTPHVL…QQIKKQRRER (141 aa). Residues 318–328 show a composition bias toward polar residues; the sequence is PTTTQASNISF. Over residues 391–406 the composition is skewed to acidic residues; the sequence is DREEDEDDLEGEDDEE.

As to quaternary structure, homodimer. Interacts with AHL3. In terms of tissue distribution, predominantly expressed in the stele of the root meristem with a specificity to the procambium.

The protein resides in the nucleus. Its function is as follows. Transcription factor that specifically binds AT-rich DNA sequences related to the nuclear matrix attachment regions (MARs). Acts redundantly with AHL3 to regulate the formation of tissue boundary between the xylem and procambium in the root meristem. Cell-to-cell movement of AHL4 from the procambium to the xylem is critical for its function in root vascular patterning. In Arabidopsis thaliana (Mouse-ear cress), this protein is AT-hook motif nuclear-localized protein 4.